Reading from the N-terminus, the 147-residue chain is Large ribosomal subunit protein uL22 (147 aa).

The segment at 110 to 147 (EEKKTVAKKAPAAKKTTTTKAPAKKTTSTKKATAKKES) is disordered. The span at 117-140 (KKAPAAKKTTTTKAPAKKTTSTKK) shows a compositional bias: low complexity.

It belongs to the universal ribosomal protein uL22 family. Part of the 50S ribosomal subunit.

Functionally, this protein binds specifically to 23S rRNA; its binding is stimulated by other ribosomal proteins, e.g. L4, L17, and L20. It is important during the early stages of 50S assembly. It makes multiple contacts with different domains of the 23S rRNA in the assembled 50S subunit and ribosome. Its function is as follows. The globular domain of the protein is located near the polypeptide exit tunnel on the outside of the subunit, while an extended beta-hairpin is found that lines the wall of the exit tunnel in the center of the 70S ribosome. This is Large ribosomal subunit protein uL22 from Campylobacter jejuni subsp. jejuni serotype O:23/36 (strain 81-176).